The following is a 79-amino-acid chain: MSEILPYSDEKMGHYGSDGDVGQISFSCRLQDTSSFFGGNQQKRPPKLGQIGRAKRVVIEDDRIDEVLKGVSDKSPSGV.

The interval 43–69 (KRPPKLGQIGRAKRVVIEDDRIDEVLK) is inhibitory domain.

This sequence belongs to the CAMK2N family.

Its subcellular location is the nucleus. The protein resides in the cytoplasm. It localises to the cytosol. Its function is as follows. Potent and specific cellular inhibitor of CaM-kinase II (CAMK2). Traps Ca(2+)/calmodulin on CAMK2. The chain is Calcium/calmodulin-dependent protein kinase II inhibitor 2 (camk2n2) from Xenopus tropicalis (Western clawed frog).